A 239-amino-acid chain; its full sequence is Purine nucleoside phosphorylase DeoD-type (239 aa).

His-5 is a binding site for a purine D-ribonucleoside. Residues Gly-21, Arg-25, Arg-44, and Arg-88–Ser-91 contribute to the phosphate site. A purine D-ribonucleoside-binding positions include Glu-180–Glu-182 and Ser-204–Asp-205. Asp-205 (proton donor) is an active-site residue.

This sequence belongs to the PNP/UDP phosphorylase family. In terms of assembly, homohexamer; trimer of homodimers.

The catalysed reaction is a purine D-ribonucleoside + phosphate = a purine nucleobase + alpha-D-ribose 1-phosphate. The enzyme catalyses a purine 2'-deoxy-D-ribonucleoside + phosphate = a purine nucleobase + 2-deoxy-alpha-D-ribose 1-phosphate. Functionally, catalyzes the reversible phosphorolytic breakdown of the N-glycosidic bond in the beta-(deoxy)ribonucleoside molecules, with the formation of the corresponding free purine bases and pentose-1-phosphate. The chain is Purine nucleoside phosphorylase DeoD-type from Salmonella gallinarum (strain 287/91 / NCTC 13346).